Consider the following 166-residue polypeptide: NADH-quinone oxidoreductase subunit E (166 aa).

[2Fe-2S] cluster is bound by residues Cys-92, Cys-97, Cys-133, and Cys-137.

The protein belongs to the complex I 24 kDa subunit family. As to quaternary structure, composed of 13 different subunits. Subunits NuoCD, E, F, and G constitute the peripheral sector of the complex. Requires [2Fe-2S] cluster as cofactor.

It catalyses the reaction a quinone + NADH + 5 H(+)(in) = a quinol + NAD(+) + 4 H(+)(out). Its function is as follows. NDH-1 shuttles electrons from NADH, via FMN and iron-sulfur (Fe-S) centers, to quinones in the respiratory chain. The immediate electron acceptor for the enzyme in this species is believed to be ubiquinone. Couples the redox reaction to proton translocation (for every two electrons transferred, four hydrogen ions are translocated across the cytoplasmic membrane), and thus conserves the redox energy in a proton gradient. This Shigella flexneri protein is NADH-quinone oxidoreductase subunit E (nuoE).